The following is a 109-amino-acid chain: Putative pterin-4-alpha-carbinolamine dehydratase (109 aa).

This sequence belongs to the pterin-4-alpha-carbinolamine dehydratase family.

It catalyses the reaction (4aS,6R)-4a-hydroxy-L-erythro-5,6,7,8-tetrahydrobiopterin = (6R)-L-erythro-6,7-dihydrobiopterin + H2O. The protein is Putative pterin-4-alpha-carbinolamine dehydratase of Vibrio cholerae serotype O1 (strain ATCC 39315 / El Tor Inaba N16961).